The chain runs to 213 residues: Orotate phosphoribosyltransferase (213 aa).

Position 26 (K26) interacts with 5-phospho-alpha-D-ribose 1-diphosphate. Residue 34–35 coordinates orotate; sequence FF. 5-phospho-alpha-D-ribose 1-diphosphate contacts are provided by residues 72-73, R99, K100, K103, H105, and 124-132; these read YK and DDVITAGTA. T128 and R156 together coordinate orotate.

This sequence belongs to the purine/pyrimidine phosphoribosyltransferase family. PyrE subfamily. As to quaternary structure, homodimer. Requires Mg(2+) as cofactor.

The enzyme catalyses orotidine 5'-phosphate + diphosphate = orotate + 5-phospho-alpha-D-ribose 1-diphosphate. It participates in pyrimidine metabolism; UMP biosynthesis via de novo pathway; UMP from orotate: step 1/2. Catalyzes the transfer of a ribosyl phosphate group from 5-phosphoribose 1-diphosphate to orotate, leading to the formation of orotidine monophosphate (OMP). In Aliivibrio fischeri (strain MJ11) (Vibrio fischeri), this protein is Orotate phosphoribosyltransferase.